Consider the following 433-residue polypeptide: Probable RNA 3'-terminal phosphate cyclase (433 aa).

The segment covering 1-10 has biased composition (low complexity); that stretch reads MGKNKNYNKN. Residues 1 to 28 form a disordered region; sequence MGKNKNYNKNQFKKSKTNNDTTVAQQQQ. Residues 18–28 are compositionally biased toward polar residues; sequence NNDTTVAQQQQ. Residues Gln-137 and 328 to 332 contribute to the ATP site; that span reads YLQDQ. His-354 functions as the Tele-AMP-histidine intermediate in the catalytic mechanism. The segment at 400 to 433 is disordered; it reads LNNNNNNSNSNTTTTTTTTTISTTTIDNQNSEEK. Residues 401–425 are compositionally biased toward low complexity; the sequence is NNNNNNSNSNTTTTTTTTTISTTTI.

Belongs to the RNA 3'-terminal cyclase family. Type 1 subfamily.

Its subcellular location is the nucleus. It is found in the nucleoplasm. The catalysed reaction is a 3'-end 3'-phospho-ribonucleotide-RNA + ATP = a 3'-end 2',3'-cyclophospho-ribonucleotide-RNA + AMP + diphosphate. Its function is as follows. Catalyzes the conversion of 3'-phosphate to a 2',3'-cyclic phosphodiester at the end of RNA. The mechanism of action of the enzyme occurs in 3 steps: (A) adenylation of the enzyme by ATP; (B) transfer of adenylate to an RNA-N3'P to produce RNA-N3'PP5'A; (C) and attack of the adjacent 2'-hydroxyl on the 3'-phosphorus in the diester linkage to produce the cyclic end product. The biological role of this enzyme is unknown but it is likely to function in some aspects of cellular RNA processing. This Dictyostelium discoideum (Social amoeba) protein is Probable RNA 3'-terminal phosphate cyclase (rtca).